The chain runs to 471 residues: L-amino acid dehydrogenase (471 aa).

Residue Gly31 coordinates Mg(2+). FAD is bound at residue Ser33. Gly34 serves as a coordination point for Mg(2+). Residues Glu52, Arg60, and Val256 each contribute to the FAD site. Mg(2+) is bound at residue Ala283. Phe453 lines the FAD pocket.

It belongs to the flavin monoamine oxidase family. It depends on FAD as a cofactor. Mg(2+) is required as a cofactor.

The protein resides in the cellular thylakoid membrane. The enzyme catalyses a plastoquinone + an L-alpha-amino acid + H2O = a plastoquinol + a 2-oxocarboxylate + NH4(+). It catalyses the reaction a plastoquinone + L-arginine + H2O = a plastoquinol + 5-guanidino-2-oxopentanoate + NH4(+). The protein operates within amino-acid degradation; L-arginine degradation. Inhibited by Ca(2+) and other cations such as Ni(2+), Co(2+) and Zn(2+). The inhibition by o-phenanthroline and salicylhydroxamic acid suggests the presence of a metal cofactor besides FAD in the enzyme. The L-arginine-stimulated O(2) consumption involving slr0782 is inhibited by inhibitors of the respiratory electron transport chain, such as KCN and 2,5-dibromo-3-methyl-6-isopropyl-p-benzoquinone, which indicates a participation of the cytochrome b6/f complex and of a cytochrome oxidase. Its function is as follows. L-amino acid dehydrogenase with broad substrate specificity. Catalyzes the oxidative deamination of various L-amino acids, L-Arg and L-Cys being the best substrates in vitro. Likely functions mainly as an L-arginine dehydrogenase in vivo. Probably feeds electrons from L-arginine oxidation and also from the oxidation of other L-amino acids into the respiratory electron transport chain associated to the thylakoid membrane, and does not directly interact with molecular oxygen but donates electrons to the plastoquinone pool. Cannot use D-amino acids as substrates. In Synechocystis sp. (strain ATCC 27184 / PCC 6803 / Kazusa), this protein is L-amino acid dehydrogenase.